Consider the following 179-residue polypeptide: Disulfide bond formation protein B (179 aa).

Residues 1-14 (MLSYFKELSLRRPA) lie on the Cytoplasmic side of the membrane. Residues 15–31 (WLLLATLACTLEVTGLY) form a helical membrane-spanning segment. Over 32–49 (FQHKLGLIPCVMCIYERV) the chain is Periplasmic. An intrachain disulfide couples Cys41 to Cys44. The chain crosses the membrane as a helical span at residues 50 to 65 (ALTGLLIAGLIALIAP). The Cytoplasmic portion of the chain corresponds to 66–72 (NFFLFRW). Residues 73–90 (LALVLWGFSAFKGLSLSI) form a helical membrane-spanning segment. The Periplasmic segment spans residues 91–146 (KHYDYQANPSPWNQCEFKPQFPQTIPLDEWFPNIFAAGTVNCSEKQWQMLGWGMPE). Cysteines 105 and 132 form a disulfide. The helical transmembrane segment at 147–165 (WLIVAFSLFMLFFLIVFMS) threads the bilayer. Over 166 to 179 (QFKRAKPQYRSVFR) the chain is Cytoplasmic.

The protein belongs to the DsbB family.

The protein resides in the cell inner membrane. Required for disulfide bond formation in some periplasmic proteins. Acts by oxidizing the DsbA protein. The polypeptide is Disulfide bond formation protein B (Haemophilus ducreyi (strain 35000HP / ATCC 700724)).